Here is a 556-residue protein sequence, read N- to C-terminus: Putative D-arabinono-1,4-lactone oxidase (556 aa).

Residues 47-217 (FTSLPELYIQ…TEVTFKAVPA (171 aa)) enclose the FAD-binding PCMH-type domain. His84 is subject to Pros-8alpha-FAD histidine.

It belongs to the oxygen-dependent FAD-linked oxidoreductase family. FAD is required as a cofactor.

The protein localises to the mitochondrion membrane. The catalysed reaction is D-arabinono-1,4-lactone + O2 = dehydro-D-arabinono-1,4-lactone + H2O2 + H(+). The protein operates within cofactor biosynthesis; D-erythroascorbate biosynthesis; dehydro-D-arabinono-1,4-lactone from D-arabinose: step 2/2. The chain is Putative D-arabinono-1,4-lactone oxidase (alo-1) from Neurospora crassa (strain ATCC 24698 / 74-OR23-1A / CBS 708.71 / DSM 1257 / FGSC 987).